A 322-amino-acid polypeptide reads, in one-letter code: Putative pyruvyl transferase EpsO (322 aa).

The protein belongs to the polysaccharide pyruvyl transferase family.

May be involved in the production of the exopolysaccharide (EPS) component of the extracellular matrix during biofilm formation. EPS is responsible for the adhesion of chains of cells into bundles. This is Putative pyruvyl transferase EpsO (epsO) from Bacillus subtilis (strain 168).